Reading from the N-terminus, the 276-residue chain is Ribosomal RNA small subunit methyltransferase A (276 aa).

S-adenosyl-L-methionine-binding residues include Asn-27, Leu-29, Gly-54, Glu-75, Asp-101, and Asn-123.

The protein belongs to the class I-like SAM-binding methyltransferase superfamily. rRNA adenine N(6)-methyltransferase family. RsmA subfamily.

Its subcellular location is the cytoplasm. The catalysed reaction is adenosine(1518)/adenosine(1519) in 16S rRNA + 4 S-adenosyl-L-methionine = N(6)-dimethyladenosine(1518)/N(6)-dimethyladenosine(1519) in 16S rRNA + 4 S-adenosyl-L-homocysteine + 4 H(+). In terms of biological role, specifically dimethylates two adjacent adenosines (A1518 and A1519) in the loop of a conserved hairpin near the 3'-end of 16S rRNA in the 30S particle. May play a critical role in biogenesis of 30S subunits. The protein is Ribosomal RNA small subunit methyltransferase A of Bartonella tribocorum (strain CIP 105476 / IBS 506).